Reading from the N-terminus, the 151-residue chain is MKARRQRKILELIKAGLVKTQEDMVNALKECGFNVTQATVSRDIKELGLIKIPGGNNAFRYALPGDRPFIRGEERLRRVFRDSVIGLDSSENLIIVKTHPGGAQGVASAIDQAGWREIIGTVGGDDTILVVVKPKRAAGAVLKRFEELSGG.

This sequence belongs to the ArgR family.

The protein resides in the cytoplasm. It participates in amino-acid biosynthesis; L-arginine biosynthesis [regulation]. Regulates arginine biosynthesis genes. In Pelotomaculum thermopropionicum (strain DSM 13744 / JCM 10971 / SI), this protein is Arginine repressor.